Reading from the N-terminus, the 137-residue chain is uncharacterized protein (137 aa).

The protein belongs to the DCC thiol-disulfide oxidoreductase family.

This is an uncharacterized protein from Bacillus subtilis (strain 168).